The following is a 92-amino-acid chain: YcgL domain-containing protein VC_1957 (92 aa).

The 84-residue stretch at M1 to K84 folds into the YcgL domain. Residues F69–P92 are disordered.

In Vibrio cholerae serotype O1 (strain ATCC 39315 / El Tor Inaba N16961), this protein is YcgL domain-containing protein VC_1957.